The chain runs to 310 residues: N-acyl-aromatic-L-amino acid amidohydrolase (carboxylate-forming) (310 aa).

2 residues coordinate Zn(2+): H20 and E23. Substrate contacts are provided by residues R62 and N69–R70. Position 113 (H113) interacts with Zn(2+). The substrate site is built by E176 and Y286.

It belongs to the AspA/AstE family. Aspartoacylase subfamily. As to quaternary structure, homotetramer. Requires Zn(2+) as cofactor.

Its subcellular location is the apical cell membrane. It localises to the cytoplasm. The enzyme catalyses an N-acyl-aromatic L-alpha-amino acid + H2O = an aromatic L-alpha-amino acid + a carboxylate. It catalyses the reaction an N-acetyl-L-cysteine-S-conjugate + H2O = an S-substituted L-cysteine + acetate. Functionally, plays an important role in deacetylating mercapturic acids in kidney proximal tubules. The chain is N-acyl-aromatic-L-amino acid amidohydrolase (carboxylate-forming) (acy3) from Xenopus tropicalis (Western clawed frog).